A 239-amino-acid polypeptide reads, in one-letter code: MRTLFIGDLHLSADRLDITKAFNRFLDTELDDADALYILGDLFEVWVGDDLAAPFALELARRLKQISQRLPIYFIHGNRDFMLGKQFTDAAGMQMLPEVTCLDLYGVSTVILHGDSLCTLDKAYQRFRKLRSFAFARWLYSCLPKRKRQAIANKIRSNSQSSNQQKSYVIMDVEPSAVDALFAQTHCKQMIHGHTHRPAIHNFTNGCKRIVVGDWYEQGSVLVVSADGVDLKSLPFDAS.

Residues Asp8, His10, Asp41, Asn78, and His113 each coordinate Mn(2+). 78 to 79 (NR) serves as a coordination point for substrate. 5 residues coordinate substrate: Asp121, Ser159, Asn163, Lys166, and His194. Mn(2+) contacts are provided by His194 and His196.

The protein belongs to the LpxH family. Requires Mn(2+) as cofactor.

It localises to the cell inner membrane. It catalyses the reaction UDP-2-N,3-O-bis[(3R)-3-hydroxytetradecanoyl]-alpha-D-glucosamine + H2O = 2-N,3-O-bis[(3R)-3-hydroxytetradecanoyl]-alpha-D-glucosaminyl 1-phosphate + UMP + 2 H(+). Its pathway is glycolipid biosynthesis; lipid IV(A) biosynthesis; lipid IV(A) from (3R)-3-hydroxytetradecanoyl-[acyl-carrier-protein] and UDP-N-acetyl-alpha-D-glucosamine: step 4/6. Hydrolyzes the pyrophosphate bond of UDP-2,3-diacylglucosamine to yield 2,3-diacylglucosamine 1-phosphate (lipid X) and UMP by catalyzing the attack of water at the alpha-P atom. Involved in the biosynthesis of lipid A, a phosphorylated glycolipid that anchors the lipopolysaccharide to the outer membrane of the cell. This Shewanella sp. (strain MR-4) protein is UDP-2,3-diacylglucosamine hydrolase.